We begin with the raw amino-acid sequence, 26 residues long: Coenzyme PQQ synthesis protein A (26 aa).

The segment at residues 16 to 20 (EINSY) is a cross-link (pyrroloquinoline quinone (Glu-Tyr)).

It belongs to the PqqA family.

It functions in the pathway cofactor biosynthesis; pyrroloquinoline quinone biosynthesis. In terms of biological role, required for coenzyme pyrroloquinoline quinone (PQQ) biosynthesis. PQQ is probably formed by cross-linking a specific glutamate to a specific tyrosine residue and excising these residues from the peptide. The chain is Coenzyme PQQ synthesis protein A from Gluconacetobacter diazotrophicus (strain ATCC 49037 / DSM 5601 / CCUG 37298 / CIP 103539 / LMG 7603 / PAl5).